The sequence spans 153 residues: Protein Smg homolog (153 aa).

This sequence belongs to the Smg family.

This chain is Protein Smg homolog, found in Neisseria meningitidis serogroup B (strain ATCC BAA-335 / MC58).